A 105-amino-acid chain; its full sequence is MQKVYNKMAGEMMSPRNAVIHNQLAMLELATLECEALGIEVETVEWFDIGKPRLVVKDCSALRHLIKTGKAFNYGSEVKNGIRIYLNQMMVKGVKFIWKSDVTKH.

This is an uncharacterized protein from Haemophilus influenzae (strain ATCC 51907 / DSM 11121 / KW20 / Rd).